The chain runs to 234 residues: Proteasome subunit alpha type-2 (234 aa).

At alanine 2 the chain carries N-acetylalanine. Tyrosine 6 is modified (phosphotyrosine). 3 positions are modified to phosphoserine: serine 7, serine 14, and serine 16. The residue at position 24 (tyrosine 24) is a Phosphotyrosine. N6-acetyllysine is present on lysine 70. Residues tyrosine 76 and tyrosine 121 each carry the phosphotyrosine modification. The residue at position 171 (lysine 171) is an N6-acetyllysine.

It belongs to the peptidase T1A family. In terms of assembly, the 26S proteasome consists of a 20S proteasome core and two 19S regulatory subunits. The 20S proteasome core is a barrel-shaped complex made of 28 subunits that are arranged in four stacked rings. The two outer rings are each formed by seven alpha subunits, and the two inner rings are formed by seven beta subunits. The proteolytic activity is exerted by three beta-subunits PSMB5, PSMB6 and PSMB7. Phosphorylated on tyrosine residues; which may be important for nuclear import.

The protein resides in the cytoplasm. The protein localises to the nucleus. Its function is as follows. Component of the 20S core proteasome complex involved in the proteolytic degradation of most intracellular proteins. This complex plays numerous essential roles within the cell by associating with different regulatory particles. Associated with two 19S regulatory particles, forms the 26S proteasome and thus participates in the ATP-dependent degradation of ubiquitinated proteins. The 26S proteasome plays a key role in the maintenance of protein homeostasis by removing misfolded or damaged proteins that could impair cellular functions, and by removing proteins whose functions are no longer required. Associated with the PA200 or PA28, the 20S proteasome mediates ubiquitin-independent protein degradation. This type of proteolysis is required in several pathways including spermatogenesis (20S-PA200 complex) or generation of a subset of MHC class I-presented antigenic peptides (20S-PA28 complex). The chain is Proteasome subunit alpha type-2 (PSMA2) from Bos taurus (Bovine).